Reading from the N-terminus, the 361-residue chain is F-box protein pof7 (361 aa).

Positions 105-157 constitute an F-box domain; it reads NESVVPNILKLPDEVLLVILENCIRDLHDLRYLSSIALTCKHFAKALRADSLY.

In terms of assembly, interacts with skp1.

Its subcellular location is the cytoplasm. The protein is F-box protein pof7 (pof7) of Schizosaccharomyces pombe (strain 972 / ATCC 24843) (Fission yeast).